The sequence spans 204 residues: Guanylate kinase (204 aa).

One can recognise a Guanylate kinase-like domain in the interval 5–184 (GLLLVLSGPS…AVNHIKAIVD (180 aa)). Residue 12–19 (GPSGVGKG) participates in ATP binding.

Belongs to the guanylate kinase family.

The protein localises to the cytoplasm. It catalyses the reaction GMP + ATP = GDP + ADP. Its function is as follows. Essential for recycling GMP and indirectly, cGMP. This Lactobacillus delbrueckii subsp. bulgaricus (strain ATCC 11842 / DSM 20081 / BCRC 10696 / JCM 1002 / NBRC 13953 / NCIMB 11778 / NCTC 12712 / WDCM 00102 / Lb 14) protein is Guanylate kinase.